The sequence spans 240 residues: Carboxy-S-adenosyl-L-methionine synthase (240 aa).

S-adenosyl-L-methionine-binding positions include tyrosine 35, 61-63 (GCS), 86-87 (DN), 112-113 (DI), and arginine 194.

It belongs to the class I-like SAM-binding methyltransferase superfamily. Cx-SAM synthase family. As to quaternary structure, homodimer.

The catalysed reaction is prephenate + S-adenosyl-L-methionine = carboxy-S-adenosyl-L-methionine + 3-phenylpyruvate + H2O. Functionally, catalyzes the conversion of S-adenosyl-L-methionine (SAM) to carboxy-S-adenosyl-L-methionine (Cx-SAM). The sequence is that of Carboxy-S-adenosyl-L-methionine synthase from Wolinella succinogenes (strain ATCC 29543 / DSM 1740 / CCUG 13145 / JCM 31913 / LMG 7466 / NCTC 11488 / FDC 602W) (Vibrio succinogenes).